Consider the following 278-residue polypeptide: Serine/threonine-protein phosphatase PGAM5, mitochondrial (278 aa).

The helical transmembrane segment at 7–27 (LIAGGSAAAAAAAILGAAAVG) threads the bilayer.

This sequence belongs to the phosphoglycerate mutase family. BPG-dependent PGAM subfamily. In terms of processing, phosphorylated by the RIPK1/RIPK3 complex under necrotic conditions. This phosphorylation increases PGAM5 phosphatase activity.

The protein localises to the mitochondrion outer membrane. It catalyses the reaction O-phospho-L-seryl-[protein] + H2O = L-seryl-[protein] + phosphate. The enzyme catalyses O-phospho-L-threonyl-[protein] + H2O = L-threonyl-[protein] + phosphate. Its function is as follows. Displays phosphatase activity for serine/threonine residues. Has apparently no phosphoglycerate mutase activity. May be regulator of mitochondrial dynamics. May be a central mediator for programmed necrosis. This chain is Serine/threonine-protein phosphatase PGAM5, mitochondrial (pgam5), found in Xenopus tropicalis (Western clawed frog).